Here is a 117-residue protein sequence, read N- to C-terminus: UPF0344 protein GK0697 (117 aa).

4 helical membrane passes run 1–21 (MTHA…LAVS), 39–59 (LFYI…ASIS), 60–80 (ALYW…EMVL), and 97–117 (VIAL…FDLF).

It belongs to the UPF0344 family.

The protein resides in the cell membrane. This is UPF0344 protein GK0697 from Geobacillus kaustophilus (strain HTA426).